A 487-amino-acid polypeptide reads, in one-letter code: GlcNAc-binding protein A (487 aa).

The signal sequence occupies residues 1–29 (MKKLPNKSLIALALLSVSGASFGHGYVSA). The 172-residue stretch at 30–201 (YENGVAEGRA…SFYNVIDVKF (172 aa)) folds into the Chitin-binding type-4 domain. Residues 438–479 (AGTKVLASDGAVYQCKEFPFSGYCTQWSPSATQFEPGKGSHW) form the Chitin-binding type-3 domain.

The protein belongs to the GbpA family.

The protein resides in the secreted. Probably interacts with GlcNAc residues. May promote attachment to both epithelial cell surfaces and chitin. The protein is GlcNAc-binding protein A of Vibrio campbellii (strain ATCC BAA-1116).